Reading from the N-terminus, the 852-residue chain is Exported protein YdbA (852 aa).

The first 21 residues, 1–21 (MQRKTLLSACIALALSGQGWA), serve as a signal peptide directing secretion. Disordered regions lie at residues 30 to 50 (TTGEKKNTNVTCPADPGKLSP), 91 to 145 (DDDH…FNND), 307 to 354 (TITN…QDGD), 407 to 449 (TNGG…KVIQ), and 506 to 531 (NGGTGTQINGNDATANNSGKTTVDGK). Positions 307-319 (TITNGGTGTQING) are enriched in low complexity. A compositionally biased stretch (polar residues) spans 339 to 348 (GTEINGNNGK). Low complexity predominate over residues 506-516 (NGGTGTQINGN). Over residues 517–526 (DATANNSGKT) the composition is skewed to polar residues.

The protein localises to the secreted. In terms of biological role, the full-length protein (which is about 2000 amino acids long) is part of the autotransporter family. This Escherichia coli (strain K12) protein is Exported protein YdbA (ydbA).